The following is a 546-amino-acid chain: Glucose-6-phosphate isomerase (546 aa).

The Proton donor role is filled by glutamate 357. Catalysis depends on residues histidine 389 and lysine 509.

This sequence belongs to the GPI family.

The protein resides in the cytoplasm. The catalysed reaction is alpha-D-glucose 6-phosphate = beta-D-fructose 6-phosphate. It participates in carbohydrate biosynthesis; gluconeogenesis. The protein operates within carbohydrate degradation; glycolysis; D-glyceraldehyde 3-phosphate and glycerone phosphate from D-glucose: step 2/4. In terms of biological role, catalyzes the reversible isomerization of glucose-6-phosphate to fructose-6-phosphate. The sequence is that of Glucose-6-phosphate isomerase from Anaeromyxobacter dehalogenans (strain 2CP-1 / ATCC BAA-258).